Reading from the N-terminus, the 360-residue chain is Mannose-1-phosphate guanylyltransferase catalytic subunit beta (360 aa).

Residues 2–222 (KALILVGGYG…QGFWMDIGQP (221 aa)) form a substrate-binding domain region. Asp-110 contributes to the GDP-alpha-D-mannose binding site. A Mg(2+)-binding site is contributed by Asp-110. Lys-162 is an active-site residue. Asp-218 lines the GDP-alpha-D-mannose pocket. A Mg(2+)-binding site is contributed by Asp-218. Residues 245-360 (CSGPGIVGNV…ESVPEPGIIM (116 aa)) are hexapeptide repeat domain.

The protein belongs to the transferase hexapeptide repeat family. In terms of assembly, component of the GMPPA-GMPPB mannose-1-phosphate guanylyltransferase complex composed of 4 GMPPA subunits and 8 GMPPB subunits; the complex is organized into three layers, a central layer made up of 2 GMPPA dimers sandwiched between two layers each made up of 2 GMPPB dimers. GMPPB catalytic activity is reduced when part of the complex and binding of GDP-alpha-D-Mannose by GMPPA induces allosteric feedback inhibition of GMPPB. Mg(2+) serves as cofactor. As to expression, expressed in the liver (at protein level).

Its subcellular location is the cytoplasm. The enzyme catalyses alpha-D-mannose 1-phosphate + GTP + H(+) = GDP-alpha-D-mannose + diphosphate. The protein operates within nucleotide-sugar biosynthesis; GDP-alpha-D-mannose biosynthesis; GDP-alpha-D-mannose from alpha-D-mannose 1-phosphate (GTP route): step 1/1. Enzyme activity is reduced by incorporation into the GMPPA-GMPPB mannose-1-phosphate guanylyltransferase complex. Allosterically inhibited, when part of the GMPPA-GMPPB complex, by GDP-alpha-D-mannose binding to GMPPA. Catalytic subunit of the GMPPA-GMPPB mannose-1-phosphate guanylyltransferase complex. Catalyzes the formation of GDP-mannose, an essential precursor of glycan moieties of glycoproteins and glycolipids. Can catalyze the reverse reaction in vitro. Together with GMPPA regulates GDP-alpha-D-mannose levels. The protein is Mannose-1-phosphate guanylyltransferase catalytic subunit beta of Sus scrofa (Pig).